Here is an 86-residue protein sequence, read N- to C-terminus: Myosuppressin (86 aa).

Positions 1-18 are cleaved as a signal peptide; it reads MAIFCNNVLAALPTQCNP. A propeptide spanning residues 19–70 is cleaved from the precursor; that stretch reads GFLDDLPPRIRKVCVALSRIYELGSEMESYIGDKENHITGFHESIPLLDSGV. Glutamine 73 carries the post-translational modification Pyrrolidone carboxylic acid. Phenylalanine amide is present on phenylalanine 82.

The protein resides in the secreted. Myoinhibiting neuropeptide. The polypeptide is Myosuppressin (Apis mellifera (Honeybee)).